The following is a 50-amino-acid chain: Bacteriocin-like protein SboX (50 aa).

This Bacillus subtilis (strain 168) protein is Bacteriocin-like protein SboX (sboX).